The chain runs to 349 residues: GDP-mannose:glycolipid 4-beta-D-mannosyltransferase (349 aa).

A signal peptide spans Met-1 to Ala-14.

It belongs to the glycosyltransferase 94 family.

It localises to the cell inner membrane. It catalyses the reaction beta-D-GlcA-(1-&gt;2)-alpha-D-Man-(1-&gt;3)-beta-D-Glc-(1-&gt;4)-alpha-D-Glc-di-trans,octa-cis-undecaprenyl diphosphate + GDP-alpha-D-mannose = beta-D-Man-(1-&gt;4)-beta-D-GlcA-(1-&gt;2)-alpha-D-Man-(1-&gt;3)-beta-D-Glc-(1-&gt;4)-alpha-D-Glc-di-trans,octa-cis-undecaprenyl diphosphate + GDP + H(+). Its pathway is glycan biosynthesis; xanthan biosynthesis. Nonprocessive beta-mannosyltransferase that catalyzes the transfer of a mannose residue from GDP-mannose to glucuronic acid-beta-1,2-mannose-alpha-1,3-glucose-beta-1,4-glucose-PP-polyisoprenyl to form the lipid-linked pentasaccharide repeating unit of xanthan, Man-GlcA-Man-Glc(2)-PP-Pol. Is involved in the biosynthesis of the exopolysaccharide xanthan. To a lesser extent, can also use ADP-Man and even GDP-Glc as sugar donor substrates in vitro. Is unable to transfer a Man residue to the free-tetrasaccharide GlcA-Man-Glc(2) used as an acceptor, which indicates that the diphosphate group and the lipid moiety in the acceptor substrate are of major importance for acceptor binding and catalysis. This is GDP-mannose:glycolipid 4-beta-D-mannosyltransferase (gumI) from Xanthomonas campestris pv. campestris.